Consider the following 782-residue polypeptide: uncharacterized protein (782 aa).

Disordered regions lie at residues 1 to 25 (MFSP…STTS) and 175 to 195 (RPRT…EDLR). Positions 13-25 (ESESVSNCESTTS) are enriched in low complexity. The segment covering 183–195 (RAGDASMSREDLR) has biased composition (basic and acidic residues). Coiled-coil stretches lie at residues 223–331 (RENR…STLN), 348–398 (LSQF…VSTL), 428–601 (NRIN…QLLN), and 699–743 (TIET…IIAK). The tract at residues 748–782 (NIPKTEKSSPMKKVPPIENFRAKSQTSITGLSPVL) is disordered. Residues 769 to 782 (AKSQTSITGLSPVL) show a composition bias toward polar residues.

This is an uncharacterized protein from Caenorhabditis elegans.